The chain runs to 432 residues: Solute carrier family 38 member 8 (432 aa).

Transmembrane regions (helical) follow at residues 29–49 (AVFILLKSALGAGLLNFPWAF), 59–79 (FLVALVSLVFLISGLVILGYA), 103–123 (LCEICFLTNLLMISVAFLRVI), 144–164 (AAQNFTLPLISMLVIFPLSAL), 175–195 (ILGTLAACYLALVITVQYYLW), 215–237 (VFSVFPTICFGFQCHEAAVSIYC), 253–273 (LSLLACCLVYTLTGVYGFLTF), 292–312 (IIVARVLFAVSIVTVYPIVLF), 345–365 (LPLTFLWVVVTLTMALFLPDL), 368–388 (IISIIGGVSSFFIFIFPGLCL), and 409–429 (GILSVLVGTFIFGQSTAVAMV).

The protein belongs to the amino acid/polyamine transporter 2 family. Expressed in neurons located in the gray matter. Highly expressed in thalamus, hypothalamus, amygdala and pons. Expressed in the CA3 area of hippocampus and in the Purkinje layer of the cerebellum (at protein level). Expressed in the eye.

It localises to the membrane. Its subcellular location is the cytoplasm. The protein localises to the cell cortex. The protein resides in the cell projection. It is found in the axon. The enzyme catalyses L-glutamine(out) = L-glutamine(in). The catalysed reaction is L-alanine(in) = L-alanine(out). It catalyses the reaction L-histidine(out) = L-histidine(in). It carries out the reaction L-aspartate(out) = L-aspartate(in). The enzyme catalyses L-arginine(in) = L-arginine(out). The catalysed reaction is L-leucine(in) = L-leucine(out). Its function is as follows. Electrogenic sodium-dependent amino acid transporter with a preference for L-glutamine, L-alanine, L-histidine, L-aspartate and L-arginine. May facilitate glutamine uptake in both excitatory and inhibitory neurons. The transport mechanism and stoichiometry remain to be elucidated. The protein is Solute carrier family 38 member 8 of Mus musculus (Mouse).